We begin with the raw amino-acid sequence, 202 residues long: Ribonuclease HII (202 aa).

An RNase H type-2 domain is found at 11–200 (GLIAGVDEVG…VRKAIEEFNR (190 aa)). The a divalent metal cation site is built by aspartate 17, glutamate 18, and aspartate 109.

Belongs to the RNase HII family. It depends on Mn(2+) as a cofactor. Mg(2+) serves as cofactor.

The protein localises to the cytoplasm. The enzyme catalyses Endonucleolytic cleavage to 5'-phosphomonoester.. Endonuclease that specifically degrades the RNA of RNA-DNA hybrids. The chain is Ribonuclease HII from Actinobacillus succinogenes (strain ATCC 55618 / DSM 22257 / CCUG 43843 / 130Z).